Reading from the N-terminus, the 133-residue chain is Small ribosomal subunit protein uS8 (133 aa).

This sequence belongs to the universal ribosomal protein uS8 family. In terms of assembly, part of the 30S ribosomal subunit. Contacts proteins S5 and S12.

Its function is as follows. One of the primary rRNA binding proteins, it binds directly to 16S rRNA central domain where it helps coordinate assembly of the platform of the 30S subunit. This Chlamydia trachomatis serovar L2b (strain UCH-1/proctitis) protein is Small ribosomal subunit protein uS8.